The following is a 277-amino-acid chain: Undecaprenyl-diphosphatase (277 aa).

The next 6 membrane-spanning stretches (helical) occupy residues Arg44–Phe64, Gly86–Ile106, Leu110–Ala130, Ala184–Ser204, Gly215–Val235, and Phe250–Val270.

Belongs to the UppP family.

The protein resides in the cell inner membrane. It catalyses the reaction di-trans,octa-cis-undecaprenyl diphosphate + H2O = di-trans,octa-cis-undecaprenyl phosphate + phosphate + H(+). Its function is as follows. Catalyzes the dephosphorylation of undecaprenyl diphosphate (UPP). Confers resistance to bacitracin. The polypeptide is Undecaprenyl-diphosphatase (Pseudomonas putida (strain ATCC 47054 / DSM 6125 / CFBP 8728 / NCIMB 11950 / KT2440)).